The sequence spans 259 residues: UPF0246 protein NMA1114 (259 aa).

It belongs to the UPF0246 family.

This is UPF0246 protein NMA1114 from Neisseria meningitidis serogroup A / serotype 4A (strain DSM 15465 / Z2491).